Here is a 33-residue protein sequence, read N- to C-terminus: Photosystem II reaction center protein Psb30 (33 aa).

The chain crosses the membrane as a helical span at residues 5–25; it reads VVVQLGSLSLIVLAGPIIVLL.

It belongs to the Psb30/Ycf12 family. As to quaternary structure, PSII is composed of 1 copy each of membrane proteins PsbA, PsbB, PsbC, PsbD, PsbE, PsbF, PsbH, PsbI, PsbJ, PsbK, PsbL, PsbM, PsbT, PsbX, PsbY, PsbZ, Psb30/Ycf12, peripheral proteins of the oxygen-evolving complex and a large number of cofactors. It forms dimeric complexes.

The protein localises to the plastid. The protein resides in the chloroplast thylakoid membrane. Functionally, a core subunit of photosystem II (PSII), probably helps stabilize the reaction center. This Mesostigma viride (Green alga) protein is Photosystem II reaction center protein Psb30.